Reading from the N-terminus, the 548-residue chain is Alpha-humulene synthase (548 aa).

Mg(2+)-binding residues include D302, D306, and E453. The DDXXD motif motif lies at 302-306; sequence DDIYD.

It belongs to the terpene synthase family. As to expression, mostly expressed in rhizomes.

It catalyses the reaction (2E,6E)-farnesyl diphosphate = alpha-humulene + diphosphate. Its function is as follows. Catalyzes the formation of alpha-humulene in the first step of zerumbone biosynthesis, a highly promising multi-anticancer agent. Also mediates formation of beta-caryophyllene at a much lower level. The sequence is that of Alpha-humulene synthase (ZSS1) from Zingiber zerumbet (Shampoo ginger).